Reading from the N-terminus, the 122-residue chain is Large ribosomal subunit protein uL14 (122 aa).

It belongs to the universal ribosomal protein uL14 family. In terms of assembly, part of the 50S ribosomal subunit. Forms a cluster with proteins L3 and L19. In the 70S ribosome, L14 and L19 interact and together make contacts with the 16S rRNA in bridges B5 and B8.

Binds to 23S rRNA. Forms part of two intersubunit bridges in the 70S ribosome. This is Large ribosomal subunit protein uL14 from Salinispora tropica (strain ATCC BAA-916 / DSM 44818 / JCM 13857 / NBRC 105044 / CNB-440).